Here is a 316-residue protein sequence, read N- to C-terminus: UDP-N-acetylenolpyruvoylglucosamine reductase (316 aa).

The FAD-binding PCMH-type domain maps to 27–225 (VGGKAERFYR…KTAINALLKK (199 aa)). Arginine 190 is an active-site residue. The Proton donor role is filled by serine 239. Glutamate 309 is a catalytic residue.

This sequence belongs to the MurB family. The cofactor is FAD.

It localises to the cytoplasm. It carries out the reaction UDP-N-acetyl-alpha-D-muramate + NADP(+) = UDP-N-acetyl-3-O-(1-carboxyvinyl)-alpha-D-glucosamine + NADPH + H(+). Its pathway is cell wall biogenesis; peptidoglycan biosynthesis. Functionally, cell wall formation. In Coxiella burnetii (strain CbuG_Q212) (Coxiella burnetii (strain Q212)), this protein is UDP-N-acetylenolpyruvoylglucosamine reductase.